Reading from the N-terminus, the 216-residue chain is Thymidylate kinase (216 aa).

ATP is bound at residue 9–16 (GIEGSGKT).

It belongs to the thymidylate kinase family.

The catalysed reaction is dTMP + ATP = dTDP + ADP. Functionally, phosphorylation of dTMP to form dTDP in both de novo and salvage pathways of dTTP synthesis. The sequence is that of Thymidylate kinase from Syntrophotalea carbinolica (strain DSM 2380 / NBRC 103641 / GraBd1) (Pelobacter carbinolicus).